A 227-amino-acid chain; its full sequence is Pro-thyrotropin-releasing hormone-A (227 aa).

The signal sequence occupies residues 1-15 (MVSVWWLLLLGTTVS). A Pyrrolidone carboxylic acid modification is found at Gln75. Residue Pro77 is modified to Proline amide. Gln89 is subject to Pyrrolidone carboxylic acid. Proline amide is present on Pro91. Gln107 carries the post-translational modification Pyrrolidone carboxylic acid. 2 disordered regions span residues 107–128 (QHPG…KREE) and 151–204 (RRQH…PCEG). Pro109 is modified (proline amide). The span at 112–128 (RFVDDVEKRQHPGKREE) shows a compositional bias: basic and acidic residues. Gln121 bears the Pyrrolidone carboxylic acid mark. Pro123 is subject to Proline amide. Gln153 bears the Pyrrolidone carboxylic acid mark. Pro155 carries the post-translational modification Proline amide. Residue Gln168 is modified to Pyrrolidone carboxylic acid. Residue Pro170 is modified to Proline amide. Residues 184-201 (ENSKEVGKRQHPGKRYDP) show a composition bias toward basic and acidic residues. At Gln193 the chain carries Pyrrolidone carboxylic acid. Pro195 is modified (proline amide).

Belongs to the TRH family.

It localises to the secreted. In Xenopus laevis (African clawed frog), this protein is Pro-thyrotropin-releasing hormone-A (trh-a).